We begin with the raw amino-acid sequence, 206 residues long: MNILQIDSSVLGGHSVSRNLTASVVADLVAANPGAKVTVRDLDQDAPAHLSGHLLPVLGGPKDGLNAAQEAELQRTETWLAEFLAADVLVVGVPQYNFSIPSQLKSWIDRIAQAGRTFKYTENGPVGLAGGKRVIVVSSRGGVRQDANELDLHEKTVDVVFRFLGITDITYVRAHGLAMGPDAREAGLSSARTEIAALNDGGRLAA.

Residues Ser-9, 15–17 (SVS), and 139–142 (SRGG) each bind FMN.

This sequence belongs to the azoreductase type 1 family. In terms of assembly, homodimer. FMN serves as cofactor.

The enzyme catalyses 2 a quinone + NADH + H(+) = 2 a 1,4-benzosemiquinone + NAD(+). It catalyses the reaction N,N-dimethyl-1,4-phenylenediamine + anthranilate + 2 NAD(+) = 2-(4-dimethylaminophenyl)diazenylbenzoate + 2 NADH + 2 H(+). Quinone reductase that provides resistance to thiol-specific stress caused by electrophilic quinones. Functionally, also exhibits azoreductase activity. Catalyzes the reductive cleavage of the azo bond in aromatic azo compounds to the corresponding amines. The polypeptide is FMN-dependent NADH:quinone oxidoreductase 1 (Cupriavidus pinatubonensis (strain JMP 134 / LMG 1197) (Cupriavidus necator (strain JMP 134))).